Consider the following 397-residue polypeptide: NADH-quinone oxidoreductase subunit H 1 (397 aa).

10 helical membrane-spanning segments follow: residues 7–27, 84–104, 120–140, 156–176, 198–218, 258–278, 279–299, 313–333, 337–357, and 376–396; these read FIFISLVKAAVIFGVLMTTLA, PFLAITMALLSISVIPFGPVI, IGVLFILAVSSMGVYGIALAG, SAQMISYELPMSLAIAAPLLI, LLSGPFPQVISFIIFIIAAFA, MITVSAMATLLFLGGWMAPWP, AAYGSSLVPSILFGISGLVLL, TFPAFGIIFLGIAGIFLLPMV, LLPLFWFCAKTGAILFAFMWI, and FLFPVAMLNLLVTGFLVAWTT.

This sequence belongs to the complex I subunit 1 family. NDH-1 is composed of 14 different subunits. Subunits NuoA, H, J, K, L, M, N constitute the membrane sector of the complex.

The protein localises to the cell inner membrane. The enzyme catalyses a quinone + NADH + 5 H(+)(in) = a quinol + NAD(+) + 4 H(+)(out). In terms of biological role, NDH-1 shuttles electrons from NADH, via FMN and iron-sulfur (Fe-S) centers, to quinones in the respiratory chain. The immediate electron acceptor for the enzyme in this species is believed to be ubiquinone. Couples the redox reaction to proton translocation (for every two electrons transferred, four hydrogen ions are translocated across the cytoplasmic membrane), and thus conserves the redox energy in a proton gradient. This subunit may bind ubiquinone. The polypeptide is NADH-quinone oxidoreductase subunit H 1 (Solibacter usitatus (strain Ellin6076)).